A 282-amino-acid chain; its full sequence is Putative hydrolase Bcenmc03_4750 (282 aa).

Residues glutamate 124, glutamate 126, and aspartate 155 each coordinate Mg(2+).

It belongs to the FAH family. Mg(2+) serves as cofactor.

This is Putative hydrolase Bcenmc03_4750 from Burkholderia orbicola (strain MC0-3).